The chain runs to 191 residues: Potassium-transporting ATPase KdpC subunit (191 aa).

The chain crosses the membrane as a helical span at residues 10-30 (ITLVFCVFFSVFYILVLWLFA).

This sequence belongs to the KdpC family. The system is composed of three essential subunits: KdpA, KdpB and KdpC.

Its subcellular location is the cell inner membrane. Part of the high-affinity ATP-driven potassium transport (or Kdp) system, which catalyzes the hydrolysis of ATP coupled with the electrogenic transport of potassium into the cytoplasm. This subunit acts as a catalytic chaperone that increases the ATP-binding affinity of the ATP-hydrolyzing subunit KdpB by the formation of a transient KdpB/KdpC/ATP ternary complex. This is Potassium-transporting ATPase KdpC subunit from Bacteroides fragilis (strain ATCC 25285 / DSM 2151 / CCUG 4856 / JCM 11019 / LMG 10263 / NCTC 9343 / Onslow / VPI 2553 / EN-2).